We begin with the raw amino-acid sequence, 601 residues long: Group B oligopeptidase PepB (601 aa).

His-386 is a binding site for Zn(2+). Residue Glu-387 is part of the active site. 2 residues coordinate Zn(2+): His-390 and His-393.

It belongs to the peptidase M3B family. It depends on Zn(2+) as a cofactor.

It is found in the cytoplasm. Functionally, has oligopeptidase activity and degrades a variety of small bioactive peptides, including bradykinin, neurotensin, and peptide fragments of substance P and adrenocorticotropin. Also hydrolyzes the synthetic collagen-like substrate N-(3-[2-furyl]acryloyl)-Leu-Gly-Pro-Ala (FALGPA). This Streptococcus agalactiae serotype III (strain NEM316) protein is Group B oligopeptidase PepB (pepB).